Consider the following 118-residue polypeptide: MKYVMLLLQVGVLYVFSLVGTWIQGVFHLSMPGSLIGMLMLFLLLSTRILPLKWFEEGAEKLLVFLPLFLIPSTTGLMEYESFLFSKGSIIFLLVVISTVVTLIVSGYISQLLVTSKK.

Helical transmembrane passes span 5 to 27, 31 to 50, 62 to 84, and 88 to 110; these read MLLL…QGVF, MPGS…TRIL, LLVF…ESFL, and GSII…GYIS.

Belongs to the CidA/LrgA family. CidA subfamily.

The protein resides in the cell membrane. In terms of biological role, increases the activity of extracellular murein hydrolases possibly by mediating their export via hole formation. Inhibited by the antiholin-like proteins LrgAB. In an unstressed cell, the LrgAB products probably inhibit the function of the CidA protein. When a cell is stressed by the addition of antibiotics or by other factors in the environment, CidA possibly oligomerizes within the bacterial cell membrane, creating lesions that disrupt the proton motive force, which in turn results in loss of cell viability. These lesions are also hypothesized to regulate the subsequent cell lysis by either allowing the murein hydrolases access to the cell wall substrate and/or regulating their activity by a possible change in the cell wall pH that results from loss of membrane potential. This Bacillus anthracis protein is Holin-like protein CidA 2 (cidA2).